Consider the following 498-residue polypeptide: Nucleobase transporter PlAzg2 (498 aa).

13 helical membrane-spanning segments follow: residues 88-108 (LLAGTVSFFAAVYIIIVNSSI), 118-138 (AGIIATILASAIGCFIMGLWG), 142-162 (LVIVPGMGINAMFTYTLVQGM), 169-189 (ALAAVMMSGICFFAISMTSLV), 203-223 (AISVGIGLMLVLIGLHKGGVI), 236-256 (FADPGVLVTLATLALTCILYI), 259-279 (VPGNLLLAIIGGSALAYLFKA), 312-332 (TLVIAVFSLTLVIVFENVGLI), 357-377 (ILSGIFGTSPTVSTVEAAAGI), 388-408 (IATGTLFLLSFIAMPVITLVP), 412-432 (VAPILIFIGGLMMPAVRHISF), 443-463 (FIIAFIPLMHSIVDGIAIGFI), and 478-498 (VKPLFYIISLLFVMHFVLQTM).

The protein belongs to the nucleobase:cation symporter-2 (NCS2) (TC 2.A.40) family. Azg-like subfamily.

The protein resides in the cell membrane. Its activity is regulated as follows. Inhibited by the proton gradient disruptor carbonyl cyanide m-chlorophenylhydrazone (CCCP), but not by the sodium gradient disruptor ouabain. Its function is as follows. Transports adenine, guanine, hypoxanthine, xanthine, cytosine and uracil. Transport is probably proton-dependent. In Paenibacillus larvae subsp. larvae (strain NRRL B-3650 / LMG 16245), this protein is Nucleobase transporter PlAzg2.